A 139-amino-acid chain; its full sequence is MEAAGGEQRELLIQRLRAAVHYTTGCLCQDVAEDKGVLFSKQTVAAISEITFRQCENFARDLEMFARHAKRSTITSEDVKLLARRSNSLLKYITQKSDELASSNMEQKEKKKKKSSAAKGRKTEENETPVTESEDSNMA.

A disordered region spans residues 99 to 139 (ELASSNMEQKEKKKKKSSAAKGRKTEENETPVTESEDSNMA). Over residues 110 to 120 (KKKKKSSAAKG) the composition is skewed to basic residues.

This sequence belongs to the TAF9 family. CENP-S/MHF1 subfamily. As to quaternary structure, heterodimer with CENPX, sometimes called MHF; this interaction stabilizes both partners. MHF heterodimers can assemble to form tetrameric structures. MHF also coassemble with CENPT-CENPW heterodimers at centromeres to form the tetrameric CENP-T-W-S-X complex. Forms a discrete complex with FANCM and CENPX, called FANCM-MHF; this interaction, probably mediated by direct binding between CENPS and FANCM, leads to synergistic activation of double-stranded DNA binding and strongly stimulates FANCM-mediated DNA remodeling. Recruited by FANCM to the Fanconi anemia (FA) core complex, which consists of CENPS, CENPX, FANCA, FANCB, FANCC, FANCE, FANCF, FANCG, FANCL, FANCM, FAAP24 and FAAP100. The FA core complex associates with Bloom syndrome (BLM) complex, which consists of at least BLM, DNA topoisomerase 3-alpha (TOP3A), RMI1/BLAP75, RPA1/RPA70 and RPA2/RPA32. The super complex between FA and BLM is called BRAFT. Component of the CENPA-CAD complex, composed of CENPI, CENPK, CENPL, CENPO, CENPP, CENPQ, CENPR and CENPS. The CENPA-CAD complex is probably recruited on centromeres by the CENPA-NAC complex, at least composed of CENPA, CENPC, CENPH, CENPM, CENPN, CENPT and CENPU.

It localises to the nucleus. It is found in the chromosome. The protein resides in the centromere. Its subcellular location is the kinetochore. Its function is as follows. DNA-binding component of the Fanconi anemia (FA) core complex. Required for the normal activation of the FA pathway, leading to monoubiquitination of the FANCI-FANCD2 complex in response to DNA damage, cellular resistance to DNA cross-linking drugs, and prevention of chromosomal breakage. In complex with CENPX (MHF heterodimer), crucial cofactor for FANCM in both binding and ATP-dependent remodeling of DNA. Stabilizes FANCM. In complex with CENPX and FANCM (but not other FANC proteins), rapidly recruited to blocked forks and promotes gene conversion at blocked replication forks. In complex with CENPT, CENPW and CENPX (CENP-T-W-S-X heterotetramer), involved in the formation of a functional kinetochore outer plate, which is essential for kinetochore-microtubule attachment and faithful mitotic progression. As a component of MHF and CENP-T-W-S-X complexes, binds DNA and bends it to form a nucleosome-like structure. DNA-binding function is fulfilled in the presence of CENPX, with the following preference for DNA substates: Holliday junction &gt; double-stranded &gt; splay arm &gt; single-stranded. Does not bind DNA on its own. The protein is Centromere protein S (CENPS) of Gallus gallus (Chicken).